A 175-amino-acid polypeptide reads, in one-letter code: Protein MODIFYING WALL LIGNIN-1 (175 aa).

An N-terminal signal peptide occupies residues Met1–Ala24. Residues Leu25–Phe52 are Cytoplasmic-facing. Residues Gly53–Ile73 traverse the membrane as a helical segment. Residues Cys74 to Thr86 lie on the Extracellular side of the membrane. Residues Ile87–Ile107 traverse the membrane as a helical segment. Topologically, residues Ser108–Val135 are cytoplasmic. Residues Phe136–Phe156 traverse the membrane as a helical segment. The Extracellular segment spans residues Lys157–Val175.

It belongs to the DESIGUAL family. As to quaternary structure, interacts with CRK19.

It is found in the cell membrane. In terms of biological role, together with MWL2, contributes to secondary cell wall biology, specifically lignin biosynthesis. The polypeptide is Protein MODIFYING WALL LIGNIN-1 (Arabidopsis thaliana (Mouse-ear cress)).